Reading from the N-terminus, the 655-residue chain is MGIFSIANQHIRFAVKLACAIVLALFIGFHFQLETPRWAVLTAAIVAAGPAFAAGGEPYSGAIRYRGMLRIIGTFIGCIAALIIIISMIRAPLLMILVCCVWAGFCTWISSLVRIENSYAWGLSGYTALIIVITIQMEPLLTPQFALERCSEIVIGIGCAILADLLFSPRSIKQEVDRELDSLLVAQYQLMQLCIKHGDSEEVDNAWGDLVRRTAALEGMRSNLNMESSRWVRANRRLKALNTLSLTLITQSCETYLIQNTRPELITDTFRELFETPVETVQDVHRQLKRMRRVIVWTGERETPVTLYSWVGAATRYLLLKRGVISNTKISATEEEILQGEPVVKVESAERHHAMVNFWRTTLSCILGTLFWLWTGWTSGNGAMVMIAVVTSLAMRLPNPRMVCIDFIYGTLAALPLGLLYFLVIIPNTQQSMLLLCLSLAVLGFFIGIEVQKRRLGSMGALASTINIIVLDNPMTFHFSQFLDSALGQIVGCMLAFIVILLVRDKSKDRTGRVLLNQFVSAAVSAMTTNVVRRKENRLPALYQQLFLLMNKFPGDLPKFRLALTMIIAHQRLRDAPIPVNEDLSVFHRQLRRTADHVISAGSDDKRRRYFGQLLDELDIYQEKLRIWEAPPQVTEPVKRLTGMLHKYQNALTDS.

The next 11 membrane-spanning stretches (helical) occupy residues 13 to 33 (FAVK…HFQL), 38 to 58 (WAVL…GGEP), 69 to 89 (LRII…ISMI), 93 to 113 (LLMI…SSLV), 121 to 141 (WGLS…EPLL), 152 to 172 (EIVI…PRSI), 370 to 390 (LFWL…IAVV), 407 to 427 (FIYG…VIIP), 431 to 451 (QSML…GIEV), 459 to 479 (MGAL…TFHF), and 482 to 502 (FLDS…VILL).

This sequence belongs to the aromatic acid exporter ArAE (TC 2.A.85) family.

The protein resides in the cell inner membrane. Functionally, forms an efflux pump with AaeA. Could function as a metabolic relief valve, allowing to eliminate certain compounds when they accumulate to high levels in the cell. This chain is p-hydroxybenzoic acid efflux pump subunit AaeB, found in Salmonella heidelberg (strain SL476).